We begin with the raw amino-acid sequence, 3387 residues long: Genome polyprotein (3387 aa).

At 1 to 100 the chain is on the cytoplasmic side; the sequence is MNQRKKVARP…LNILNGRKRS (100 aa). The tract at residues 36-71 is hydrophobic; homodimerization of capsid protein C; that stretch reads LFSGKGPLRMVLAFITFLRVLSIPPTAGILKRWGQL. Positions 100–113 are cleaved as a propeptide — ER anchor for the capsid protein C, removed in mature form by serine protease NS3; that stretch reads STITLLCLIPTVMA. A helical transmembrane segment spans residues 101-117; it reads TITLLCLIPTVMAFHLS. Topologically, residues 118–237 are extracellular; that stretch reads TRDGEPLMIV…GAWKHAQRVE (120 aa). A glycan (N-linked (GlcNAc...) asparagine; by host) is linked at Asn-182. The chain crosses the membrane as a helical span at residues 238–258; the sequence is SWILRNPGFALLAGFMAYMIG. Residues 259–265 are Cytoplasmic-facing; the sequence is QTGIQRT. A helical transmembrane segment spans residues 266-279; the sequence is VFFILMMLVAPSYG. Topologically, residues 280 to 725 are extracellular; the sequence is MRCVGVGNRD…HQVFGSVYTT (446 aa). 4 cysteine pairs are disulfide-bonded: Cys-282-Cys-309, Cys-339-Cys-400, Cys-353-Cys-384, and Cys-371-Cys-395. Asn-346 is a glycosylation site (N-linked (GlcNAc...) asparagine; by host). The segment at 377 to 390 is fusion peptide; it reads DRGWGNGCGLFGKG. Asn-432 is a glycosylation site (N-linked (GlcNAc...) asparagine; by host). 2 cysteine pairs are disulfide-bonded: Cys-464/Cys-564 and Cys-581/Cys-612. The chain crosses the membrane as a helical span at residues 726-746; it reads MFGGVSWMVRILIGLLVLWIG. Residues 747 to 753 are Cytoplasmic-facing; it reads TNSRNTS. Residues 754-774 form a helical membrane-spanning segment; sequence MAMSCIAVGGITLFLGFTVHA. At 775–1194 the chain is on the extracellular side; it reads DMGCAVSWSG…MLGDTMSGRM (420 aa). 6 disulfide bridges follow: Cys-778/Cys-789, Cys-829/Cys-917, Cys-953/Cys-997, Cys-1054/Cys-1103, Cys-1065/Cys-1087, and Cys-1086/Cys-1090. Asn-904 and Asn-981 each carry an N-linked (GlcNAc...) asparagine; by host glycan. A helical transmembrane segment spans residues 1195–1218; the sequence is GGQIHLAIMAVFKMSPGYVLGIFL. The Lumenal segment spans residues 1219-1224; it reads RKLTSR. Residues 1225-1243 form a helical membrane-spanning segment; sequence ETALMVIGMAMTTVLSIPH. Over 1244 to 1267 the chain is Cytoplasmic; it reads DLMEFIDGISLGLILLKMVTHFDN. Residues 1268–1288 traverse the membrane as a helical segment; that stretch reads TQVGTLALSLTFIKSTMPLVM. A topological domain (lumenal) is located at residue Ala-1289. Residues 1290 to 1308 form a helical membrane-spanning segment; the sequence is WRTIMAVLFVVTLIPLCRT. Residues 1309–1316 are Lumenal-facing; that stretch reads SCLQKQSH. A helical transmembrane segment spans residues 1317-1337; it reads WVEITALILGAQALPVYLMTL. Residues 1338-1345 lie on the Cytoplasmic side of the membrane; sequence MKGASKRS. A helical membrane pass occupies residues 1346–1366; it reads WPLNEGIMAVGLVSLLGSALL. Topologically, residues 1367 to 1369 are lumenal; the sequence is KND. A helical transmembrane segment spans residues 1370-1390; it reads VPLAGPMVAGGLLLAAYVMSG. Residues 1391 to 1437 are Cytoplasmic-facing; sequence SSADLSLEKAANVQWDEMADITGSSPIIEVKQDEDGSFSIRDVEETN. The interacts with and activates NS3 protease stretch occupies residues 1397–1436; the sequence is LEKAANVQWDEMADITGSSPIIEVKQDEDGSFSIRDVEET. The segment at residues 1438–1458 is an intramembrane region (helical); it reads MITLLVKLALITVSGLYPLAI. Topologically, residues 1459 to 2143 are cytoplasmic; it reads PVTMTLWYMW…QHALNELPES (685 aa). The region spanning 1475 to 1652 is the Peptidase S7 domain; the sequence is SGALWDVPSP…ERIGEPDYEV (178 aa). Residues His-1525, Asp-1549, and Ser-1609 each act as charge relay system; for serine protease NS3 activity in the active site. Residues 1654–1810 enclose the Helicase ATP-binding domain; it reads EDIFRKKRLT…QSNSPIEDIE (157 aa). Residues 1658-1661 are important for RNA-binding; the sequence is RKKR. 1667-1674 is a binding site for ATP; it reads LHPGAGKT. A DEAH box motif is present at residues 1758–1761; the sequence is DEAH. Residues 1820-1987 form the Helicase C-terminal domain; sequence TGFDWITDYQ…IIPTLFGPER (168 aa). Lys-1862 is modified (N6-acetyllysine; by host). Residues 2144–2164 traverse the membrane as a helical segment; it reads LETLMLVALLGAMTAGIFLFF. The Lumenal segment spans residues 2165 to 2169; sequence MQGKG. Residues 2170–2190 constitute an intramembrane region (helical); it reads IGKLSMGLIAIAVASGLLWVA. Position 2191 (Glu-2191) is a topological domain, lumenal. Residues 2192 to 2212 traverse the membrane as a helical segment; sequence IQPQWIAASIILEFFLMVLLV. The Cytoplasmic segment spans residues 2213–2225; sequence PEPEKQRTPQDNQ. A helical membrane pass occupies residues 2226–2246; the sequence is LIYVILTILTIIALVAANEMG. The Lumenal segment spans residues 2247 to 2270; the sequence is LIEKTKTDFGFYQAKTETTILDVD. The helical intramembrane region spans 2271 to 2291; it reads LRPASAWTLYAVATTILTPML. Topologically, residues 2292 to 2301 are lumenal; it reads RHTIENTSAN. N-linked (GlcNAc...) asparagine; by host glycosylation is found at Asn-2297 and Asn-2301. Residues 2302–2322 constitute an intramembrane region (helical); the sequence is LSLAAIANQAAVLMGLGKGWP. Residues 2323–2343 are Lumenal-facing; that stretch reads LHRMDLGVPLLAMGCYSQVNP. The helical transmembrane segment at 2344-2364 threads the bilayer; sequence TTLTASLVMLLVHYAIIGPGL. Residues 2365–2409 lie on the Cytoplasmic side of the membrane; sequence QAKATREAQKRTAAGIMKNPTVDGITVIDLEPISYDPKFEKQLGQ. A helical membrane pass occupies residues 2410-2430; sequence VMLLVLCAGQLLLMRTTWAFC. Residues 2431 to 2455 are Lumenal-facing; the sequence is EVLTLATGPILTLWEGNPGRFWNTT. A glycan (N-linked (GlcNAc...) asparagine; by host) is linked at Asn-2453. Residues 2456–2476 form a helical membrane-spanning segment; the sequence is IAVSTANIFRGSYLAGAGLAF. Residues 2477–3387 lie on the Cytoplasmic side of the membrane; the sequence is SLIKNAQTPR…SAHFESEGVL (911 aa). The mRNA cap 0-1 NS5-type MT domain maps to 2489 to 2751; sequence TGTTGETLGE…DADLGAGTRS (263 aa). Ser-2543 contributes to the S-adenosyl-L-methionine binding site. Residue Ser-2543 is modified to Phosphoserine. Catalysis depends on Lys-2548, which acts as the For 2'-O-MTase activity. An SUMO-interacting motif motif is present at residues 2564 to 2567; sequence VVDL. Residues Gly-2573, Trp-2574, Thr-2591, Lys-2592, Asp-2618, and Val-2619 each coordinate S-adenosyl-L-methionine. Asp-2633 (for 2'-O-MTase activity) is an active-site residue. Residue Ile-2634 coordinates S-adenosyl-L-methionine. Residues Lys-2668 and Glu-2704 each act as for 2'-O-MTase activity in the active site. Position 2706 (Tyr-2706) interacts with S-adenosyl-L-methionine. Positions 2925, 2929, 2934, and 2937 each coordinate Zn(2+). Positions 3016–3166 constitute a RdRp catalytic domain; it reads LIYADDTAGW…PLDERFSTSL (151 aa). Residues His-3200, Cys-3216, and Cys-3335 each contribute to the Zn(2+) site.

This sequence in the N-terminal section; belongs to the class I-like SAM-binding methyltransferase superfamily. mRNA cap 0-1 NS5-type methyltransferase family. In terms of assembly, homodimer. Interacts (via N-terminus) with host EXOC1 (via C-terminus); this interaction results in EXOC1 degradation through the proteasome degradation pathway. As to quaternary structure, forms heterodimers with envelope protein E in the endoplasmic reticulum and Golgi. Homodimer; in the endoplasmic reticulum and Golgi. Interacts with protein prM. Interacts with non-structural protein 1. In terms of assembly, homodimer; Homohexamer when secreted. Interacts with envelope protein E. As to quaternary structure, interacts (via N-terminus) with serine protease NS3. Forms a heterodimer with serine protease NS3. May form homooligomers. In terms of assembly, forms a heterodimer with NS2B. Interacts with NS4B. Interacts with unphosphorylated RNA-directed RNA polymerase NS5; this interaction stimulates RNA-directed RNA polymerase NS5 guanylyltransferase activity. Interacts with host SHFL. As to quaternary structure, interacts with host MAVS; this interaction inhibits the synthesis of IFN-beta. Interacts with host SHFL. Interacts with host AUP1; the interaction occurs in the presence of Dengue virus NS4B and induces lipophagy which facilitates production of virus progeny particles. Interacts with serine protease NS3. In terms of assembly, homodimer. Interacts with host STAT2; this interaction inhibits the phosphorylation of the latter, and, when all viral proteins are present (polyprotein), targets STAT2 for degradation. Interacts with serine protease NS3. Interacts with host PAF1 complex; the interaction may prevent the recruitment of the PAF1 complex to interferon-responsive genes, and thus reduces the immune response. In terms of processing, specific enzymatic cleavages in vivo yield mature proteins. Cleavages in the lumen of endoplasmic reticulum are performed by host signal peptidase, whereas cleavages in the cytoplasmic side are performed by serine protease NS3. Signal cleavage at the 2K-4B site requires a prior NS3 protease-mediated cleavage at the 4A-2K site. Cleaved in post-Golgi vesicles by a host furin, releasing the mature small envelope protein M, and peptide pr. This cleavage is incomplete as up to 30% of viral particles still carry uncleaved prM. Post-translationally, N-glycosylated. In terms of processing, N-glycosylated. The excreted form is glycosylated and this is required for efficient secretion of the protein from infected cells. Acetylated by host KAT5. Acetylation modulates NS3 RNA-binding and unwinding activities and plays an important positive role for viral replication. Post-translationally, sumoylation of RNA-directed RNA polymerase NS5 increases NS5 protein stability allowing proper viral RNA replication. In terms of processing, phosphorylated on serines residues. This phosphorylation may trigger NS5 nuclear localization.

Its subcellular location is the virion. The protein localises to the host nucleus. It is found in the host cytoplasm. It localises to the host perinuclear region. The protein resides in the secreted. Its subcellular location is the virion membrane. The protein localises to the host endoplasmic reticulum membrane. It is found in the host mitochondrion. The enzyme catalyses Selective hydrolysis of -Xaa-Xaa-|-Yaa- bonds in which each of the Xaa can be either Arg or Lys and Yaa can be either Ser or Ala.. It carries out the reaction RNA(n) + a ribonucleoside 5'-triphosphate = RNA(n+1) + diphosphate. It catalyses the reaction a ribonucleoside 5'-triphosphate + H2O = a ribonucleoside 5'-diphosphate + phosphate + H(+). The catalysed reaction is ATP + H2O = ADP + phosphate + H(+). The enzyme catalyses a 5'-end (5'-triphosphoguanosine)-ribonucleoside in mRNA + S-adenosyl-L-methionine = a 5'-end (N(7)-methyl 5'-triphosphoguanosine)-ribonucleoside in mRNA + S-adenosyl-L-homocysteine. It carries out the reaction a 5'-end (N(7)-methyl 5'-triphosphoguanosine)-ribonucleoside in mRNA + S-adenosyl-L-methionine = a 5'-end (N(7)-methyl 5'-triphosphoguanosine)-(2'-O-methyl-ribonucleoside) in mRNA + S-adenosyl-L-homocysteine + H(+). Its function is as follows. Plays a role in virus budding by binding to the cell membrane and gathering the viral RNA into a nucleocapsid that forms the core of a mature virus particle. During virus entry, may induce genome penetration into the host cytoplasm after hemifusion induced by the surface proteins. Can migrate to the cell nucleus where it modulates host functions. Overcomes the anti-viral effects of host EXOC1 by sequestering and degrading the latter through the proteasome degradation pathway. Functionally, inhibits RNA silencing by interfering with host Dicer. Prevents premature fusion activity of envelope proteins in trans-Golgi by binding to envelope protein E at pH6.0. After virion release in extracellular space, gets dissociated from E dimers. In terms of biological role, acts as a chaperone for envelope protein E during intracellular virion assembly by masking and inactivating envelope protein E fusion peptide. prM is the only viral peptide matured by host furin in the trans-Golgi network probably to avoid catastrophic activation of the viral fusion activity in acidic Golgi compartment prior to virion release. prM-E cleavage is inefficient, and many virions are only partially matured. These uncleaved prM would play a role in immune evasion. Its function is as follows. May play a role in virus budding. Exerts cytotoxic effects by activating a mitochondrial apoptotic pathway through M ectodomain. May display a viroporin activity. Functionally, binds to host cell surface receptor and mediates fusion between viral and cellular membranes. Envelope protein is synthesized in the endoplasmic reticulum in the form of heterodimer with protein prM. They play a role in virion budding in the ER, and the newly formed immature particle is covered with 60 spikes composed of heterodimer between precursor prM and envelope protein E. The virion is transported to the Golgi apparatus where the low pH causes dissociation of PrM-E heterodimers and formation of E homodimers. prM-E cleavage is inefficient, and many virions are only partially matured. These uncleaved prM would play a role in immune evasion. Involved in immune evasion, pathogenesis and viral replication. Once cleaved off the polyprotein, is targeted to three destinations: the viral replication cycle, the plasma membrane and the extracellular compartment. Essential for viral replication. Required for formation of the replication complex and recruitment of other non-structural proteins to the ER-derived membrane structures. Excreted as a hexameric lipoparticle that plays a role against host immune response. Antagonizing the complement function. Binds to the host macrophages and dendritic cells. Inhibits signal transduction originating from Toll-like receptor 3 (TLR3). In terms of biological role, disrupts the host endothelial glycocalyx layer of host pulmonary microvascular endothelial cells, inducing degradation of sialic acid and shedding of heparan sulfate proteoglycans. NS1 induces expression of sialidases, heparanase, and activates cathepsin L, which activates heparanase via enzymatic cleavage. These effects are probably linked to the endothelial hyperpermeability observed in severe dengue disease. Its function is as follows. Component of the viral RNA replication complex that functions in virion assembly and antagonizes the host immune response. Functionally, required cofactor for the serine protease function of NS3. May have membrane-destabilizing activity and form viroporins. Displays three enzymatic activities: serine protease, NTPase and RNA helicase. NS3 serine protease, in association with NS2B, performs its autocleavage and cleaves the polyprotein at dibasic sites in the cytoplasm: C-prM, NS2A-NS2B, NS2B-NS3, NS3-NS4A, NS4A-2K and NS4B-NS5. NS3 RNA helicase binds RNA and unwinds dsRNA in the 3' to 5' direction. In terms of biological role, regulates the ATPase activity of the NS3 helicase activity. NS4A allows NS3 helicase to conserve energy during unwinding. Plays a role in the inhibition of the host innate immune response. Interacts with host MAVS and thereby prevents the interaction between RIGI and MAVS. In turn, IFN-beta production is impaired. Interacts with host AUP1 which mediates induction of lipophagy in host cells and facilitates production of virus progeny particles. Its function is as follows. Functions as a signal peptide for NS4B and is required for the interferon antagonism activity of the latter. Functionally, induces the formation of ER-derived membrane vesicles where the viral replication takes place. Inhibits interferon (IFN)-induced host STAT1 phosphorylation and nuclear translocation, thereby preventing the establishment of cellular antiviral state by blocking the IFN-alpha/beta pathway. Replicates the viral (+) and (-) RNA genome, and performs the capping of genomes in the cytoplasm. NS5 methylates viral RNA cap at guanine N-7 and ribose 2'-O positions. Besides its role in RNA genome replication, also prevents the establishment of cellular antiviral state by blocking the interferon-alpha/beta (IFN-alpha/beta) signaling pathway. Inhibits host TYK2 and STAT2 phosphorylation, thereby preventing activation of JAK-STAT signaling pathway. May reduce immune responses by preventing the recruitment of the host PAF1 complex to interferon-responsive genes. This is Genome polyprotein from Dengue virus type 4 (strain Thailand/0348/1991) (DENV-4).